A 408-amino-acid chain; its full sequence is Putative odorant receptor 92a (408 aa).

Over 1 to 52 the chain is Cytoplasmic; it reads MLFRKRKPKSDDEVITFDELTRFPMTFYKTIGEDLYSDRDPNVIRRYLLRFY. The chain crosses the membrane as a helical span at residues 53 to 73; it reads LVLGFLNFNAYVVGEIAYFIV. H74 is a topological domain (extracellular). A helical transmembrane segment spans residues 75–95; that stretch reads IMSTTTLLEATAVAPCIGFSF. The Cytoplasmic portion of the chain corresponds to 96-144; that stretch reads MADFKQFGLTVNRKRLVRLLDDLKEIFPLDLEAQRKYNVSFYRKHMNRV. A helical transmembrane segment spans residues 145 to 165; the sequence is MTLFTILCMTYTSSFSFYPAI. Over 166–209 the chain is Extracellular; the sequence is KSTIKYYLMGSEIFERNYGFHILFPYDAETDLTVYWFSYWGLAH. A helical membrane pass occupies residues 210–230; it reads CAYVAGVSYVCVDLLLIATIT. At 231 to 276 the chain is on the cytoplasmic side; sequence QLTMHFNFIANDLEAYEGGDHTDEENIKYLHNLVVYHARALDLSEE. A helical transmembrane segment spans residues 277–301; it reads VNNIFSFLILWNFIAASLVICFAGF. Topologically, residues 302 to 310 are extracellular; it reads QITASNVED. A helical membrane pass occupies residues 311-331; sequence IVLYFIFFSASLVQVFVVCYY. Residues 332–378 lie on the Cytoplasmic side of the membrane; it reads GDEMISSSSRIGHSAFNQNWLPCSTKYKRILQFIIARSQKPASIRPP. Residues 379 to 399 traverse the membrane as a helical segment; it reads TFPPISFNTFMKVISMSYQFF. Residues 400–408 are Extracellular-facing; that stretch reads ALLRTTYYG.

This sequence belongs to the insect chemoreceptor superfamily. Heteromeric odorant receptor channel (TC 1.A.69) family. Or49a subfamily. In terms of assembly, interacts with Orco. Complexes exist early in the endomembrane system in olfactory sensory neurons (OSNs), coupling these complexes to the conserved ciliary trafficking pathway.

It localises to the cell membrane. Odorant receptor which mediates acceptance or avoidance behavior, depending on its substrates. The odorant receptor repertoire encodes a large collection of odor stimuli that vary widely in identity, intensity, and duration. May form a complex with Orco to form odorant-sensing units, providing sensitive and prolonged odorant signaling and calcium permeability. The sequence is that of Putative odorant receptor 92a (Or92a) from Drosophila melanogaster (Fruit fly).